A 479-amino-acid polypeptide reads, in one-letter code: ATP synthase subunit beta (479 aa).

ATP is bound at residue 160–167; it reads GGAGVGKT.

It belongs to the ATPase alpha/beta chains family. In terms of assembly, F-type ATPases have 2 components, CF(1) - the catalytic core - and CF(0) - the membrane proton channel. CF(1) has five subunits: alpha(3), beta(3), gamma(1), delta(1), epsilon(1). CF(0) has three main subunits: a(1), b(2) and c(9-12). The alpha and beta chains form an alternating ring which encloses part of the gamma chain. CF(1) is attached to CF(0) by a central stalk formed by the gamma and epsilon chains, while a peripheral stalk is formed by the delta and b chains.

Its subcellular location is the cell inner membrane. The catalysed reaction is ATP + H2O + 4 H(+)(in) = ADP + phosphate + 5 H(+)(out). In terms of biological role, produces ATP from ADP in the presence of a proton gradient across the membrane. The catalytic sites are hosted primarily by the beta subunits. The polypeptide is ATP synthase subunit beta (Anaplasma phagocytophilum (strain HZ)).